Reading from the N-terminus, the 825-residue chain is Penicillin-binding protein 1A (825 aa).

Residues 1–6 lie on the Cytoplasmic side of the membrane; the sequence is MKFIKR. Residues 7–27 traverse the membrane as a helical; Signal-anchor for type II membrane protein segment; it reads LLVFSLICIILGVTTIFGFYF. At 28-825 the chain is on the periplasmic side; that stretch reads YVKSDLPDVA…YSTSSGEELF (798 aa). The interval 48–216 is transglycosylase; sequence MQVFSQDGKL…STMNPIYSVE (169 aa). E86 functions as the Proton donor; for transglycosylase activity in the catalytic mechanism. The interval 413–752 is transpeptidase; sequence PRTQDGAITA…GKTALPAWVE (340 aa). Residue S471 is the Acyl-ester intermediate; for transpeptidase activity of the active site.

The protein in the N-terminal section; belongs to the glycosyltransferase 51 family. It in the C-terminal section; belongs to the transpeptidase family.

It localises to the cell inner membrane. It carries out the reaction [GlcNAc-(1-&gt;4)-Mur2Ac(oyl-L-Ala-gamma-D-Glu-L-Lys-D-Ala-D-Ala)](n)-di-trans,octa-cis-undecaprenyl diphosphate + beta-D-GlcNAc-(1-&gt;4)-Mur2Ac(oyl-L-Ala-gamma-D-Glu-L-Lys-D-Ala-D-Ala)-di-trans,octa-cis-undecaprenyl diphosphate = [GlcNAc-(1-&gt;4)-Mur2Ac(oyl-L-Ala-gamma-D-Glu-L-Lys-D-Ala-D-Ala)](n+1)-di-trans,octa-cis-undecaprenyl diphosphate + di-trans,octa-cis-undecaprenyl diphosphate + H(+). The enzyme catalyses Preferential cleavage: (Ac)2-L-Lys-D-Ala-|-D-Ala. Also transpeptidation of peptidyl-alanyl moieties that are N-acyl substituents of D-alanine.. Its pathway is cell wall biogenesis; peptidoglycan biosynthesis. In terms of biological role, cell wall formation. Synthesis of cross-linked peptidoglycan from the lipid intermediates. The enzyme has a penicillin-insensitive transglycosylase N-terminal domain (formation of linear glycan strands) and a penicillin-sensitive transpeptidase C-terminal domain (cross-linking of the peptide subunits). The protein is Penicillin-binding protein 1A (mrcA) of Vibrio cholerae serotype O1 (strain ATCC 39315 / El Tor Inaba N16961).